The chain runs to 484 residues: Threonine synthase-like 2 (484 aa).

K113 is subject to N6-(pyridoxal phosphate)lysine.

Belongs to the threonine synthase family. It depends on pyridoxal 5'-phosphate as a cofactor.

Its function is as follows. Acts as a catabolic phospho-lyase on both gamma- and beta-phosphorylated substrates. Degrades O-phospho-threonine (PThr) to alpha-ketobutyrate, ammonia and phosphate. The protein is Threonine synthase-like 2 (THNSL2) of Pongo abelii (Sumatran orangutan).